A 179-amino-acid polypeptide reads, in one-letter code: Translation initiation factor IF-3 (179 aa).

Belongs to the IF-3 family. In terms of assembly, monomer.

The protein localises to the cytoplasm. Functionally, IF-3 binds to the 30S ribosomal subunit and shifts the equilibrium between 70S ribosomes and their 50S and 30S subunits in favor of the free subunits, thus enhancing the availability of 30S subunits on which protein synthesis initiation begins. The chain is Translation initiation factor IF-3 from Buchnera aphidicola subsp. Schizaphis graminum (strain Sg).